Reading from the N-terminus, the 185-residue chain is Protein C2-DOMAIN ABA-RELATED 9 (185 aa).

The C2 domain maps to 1–104; sequence MEDKPLGILR…LEAHQMELDF (104 aa). The Ca(2+) site is built by arginine 22, aspartate 23, aspartate 28, aspartate 74, lysine 75, aspartate 76, and aspartate 82.

Belongs to the plant CAR protein family. Binds to PYR/PYL/RCAR abscisic acid intracellular receptors in an ABA-independent manner, both at the plasma membrane and in the nucleus. Interacts with LOT1 in the nuleus; this interaction is repressed by abscisic acid (ABA) and is sensitive to calcium ion Ca(2+), leading to free CAR9 accumulation at the plasma membrane. Requires Ca(2+) as cofactor.

The protein localises to the cell membrane. It localises to the nucleus. Its function is as follows. Stimulates the GTPase/ATPase activities of Obg-like ATPases. Mediates the transient calcium-dependent interaction of PYR/PYL/RCAR abscisic acid (ABA) receptors with the plasma membrane and thus regulates ABA sensitivity. The chain is Protein C2-DOMAIN ABA-RELATED 9 from Arabidopsis thaliana (Mouse-ear cress).